Reading from the N-terminus, the 286-residue chain is Ribosome-inactivating protein momordin II (286 aa).

The N-terminal stretch at 1–23 (MVKCLLLSFLIIAIFIGVPTAKG) is a signal peptide. The active site involves Glu-181.

Belongs to the ribosome-inactivating protein family. Type 1 RIP subfamily.

The catalysed reaction is Endohydrolysis of the N-glycosidic bond at one specific adenosine on the 28S rRNA.. In Momordica balsamina (Bitter gourd), this protein is Ribosome-inactivating protein momordin II.